Reading from the N-terminus, the 276-residue chain is Large ribosomal subunit protein uL2c (276 aa).

Disordered stretches follow at residues 1-51 and 224-276; these read MAIR…GIIT and VVMN…RRRK. 2 stretches are compositionally biased toward polar residues: residues 7–18 and 27–37; these read RTYTPSTRNRPI and SNPQKKLTSGQ.

It belongs to the universal ribosomal protein uL2 family. In terms of assembly, part of the 50S ribosomal subunit.

Its subcellular location is the plastid. It localises to the chloroplast. The sequence is that of Large ribosomal subunit protein uL2c (rpl2) from Cycas taitungensis (Prince sago).